The chain runs to 97 residues: Co-chaperonin GroES (97 aa).

Belongs to the GroES chaperonin family. In terms of assembly, heptamer of 7 subunits arranged in a ring. Interacts with the chaperonin GroEL.

Its subcellular location is the cytoplasm. Functionally, together with the chaperonin GroEL, plays an essential role in assisting protein folding. The GroEL-GroES system forms a nano-cage that allows encapsulation of the non-native substrate proteins and provides a physical environment optimized to promote and accelerate protein folding. GroES binds to the apical surface of the GroEL ring, thereby capping the opening of the GroEL channel. The polypeptide is Co-chaperonin GroES (Edwardsiella ictaluri (strain 93-146)).